Consider the following 403-residue polypeptide: Tyrosine--tRNA ligase (403 aa).

Positions 42–51 match the 'HIGH' region motif; it reads PTAPDLHLGH. The 'KMSKS' region signature appears at 226-230; the sequence is KMSKS. Lys229 is a binding site for ATP. An S4 RNA-binding domain is found at 336-396; sequence MPISAVLNKA…GKKAFGRVTL (61 aa).

This sequence belongs to the class-I aminoacyl-tRNA synthetase family. TyrS type 2 subfamily. As to quaternary structure, homodimer.

The protein localises to the cytoplasm. It catalyses the reaction tRNA(Tyr) + L-tyrosine + ATP = L-tyrosyl-tRNA(Tyr) + AMP + diphosphate + H(+). Functionally, catalyzes the attachment of tyrosine to tRNA(Tyr) in a two-step reaction: tyrosine is first activated by ATP to form Tyr-AMP and then transferred to the acceptor end of tRNA(Tyr). This is Tyrosine--tRNA ligase from Pseudomonas syringae pv. syringae (strain B728a).